A 369-amino-acid polypeptide reads, in one-letter code: MSASQNIVVSETTMSSIIPNNNNNNNNSSSQKLPPCLISISKKKLLKNIDIINGGGQRINAWVDSMRASSPTHLKSLPSSISTQQQLNSWIMQHPSALEKFEQIMEASRGKQIVMFLDYDGTLSPIVDDPDKAFMSSKMRRTVKKLAKCFPTAIVTGRCIDKVYNFVKLAELYYAGSHGMDIKGPAKGFSRHKRVKQSLLYQPANDYLPMIDEVYRQLLEKTKSTPGAKVENHKFCASVHFRCVDEKKWSELVLQVRSVLKKFPTLQLTQGRKVFEIRPMIEWDKGKALEFLLESLGFGNTNNVFPVYIGDDRTDEDAFKMLRDRGEGFGILVSKFPKDTDASYSLQDPSEVMDFLRRLVEWKQMQPRM.

Belongs to the trehalose phosphatase family. A divalent metal cation is required as a cofactor.

The enzyme catalyses alpha,alpha-trehalose 6-phosphate + H2O = alpha,alpha-trehalose + phosphate. The protein operates within glycan biosynthesis; trehalose biosynthesis. In terms of biological role, removes the phosphate from trehalose 6-phosphate to produce free trehalose. Trehalose accumulation in plant may improve abiotic stress tolerance. The chain is Probable trehalose-phosphate phosphatase I (TPPI) from Arabidopsis thaliana (Mouse-ear cress).